Here is a 154-residue protein sequence, read N- to C-terminus: Iron-sulfur cluster assembly enzyme IscU (154 aa).

Belongs to the NifU family. As to quaternary structure, component of the mitochondrial core iron-sulfur cluster (ISC) assembly complex at least composed of the cystein desulfurase Nfs1, the scaffold protein IscU, the accessory protein bcn92/Isd11/Lyrm4, and probably fh/frataxin. Interacts with Nfs1. Fe(2+) serves as cofactor. The cofactor is [2Fe-2S] cluster.

It functions in the pathway cofactor biosynthesis; iron-sulfur cluster biosynthesis. Its function is as follows. Scaffold protein for the de novo synthesis of iron-sulfur (Fe-S) clusters within mitochondria, which is required for maturation of both mitochondrial and cytoplasmic [2Fe-2S] and [4Fe-4S] proteins. Component of the mitochondrial core iron-sulfur cluster (ISC) assembly complex; regulates its activity. The polypeptide is Iron-sulfur cluster assembly enzyme IscU (Drosophila melanogaster (Fruit fly)).